A 204-amino-acid chain; its full sequence is Cobalt-containing nitrile hydratase subunit alpha (204 aa).

Co(2+) contacts are provided by Cys-108, Cys-111, Ser-112, and Cys-113. Cys-111 carries the cysteine sulfinic acid (-SO2H) modification. Cysteine sulfenic acid (-SOH) is present on Cys-113.

The protein belongs to the nitrile hydratase subunit alpha family. In terms of assembly, heterotetramer of two alpha and two beta chains. Requires Co(2+) as cofactor.

It catalyses the reaction an aliphatic primary amide = an aliphatic nitrile + H2O. NHase catalyzes the hydration of various nitrile compounds to the corresponding amides. This Pseudonocardia thermophila protein is Cobalt-containing nitrile hydratase subunit alpha.